Consider the following 518-residue polypeptide: MADLSSPDGDPTIRTLLRHVLDTADSHTPRRRQSTQTNPQRRRSQTPYSKRQGSQRKTSTRKHSHGTGSVGRLARVQGHGHLEEQTPRTLLQNILLTAPESSTVMPNPVVKPAQVPEVARPSRRGSSRGSLELQLPELDPPSTLAPGLKAPGKRKQKLRLSVFQQEVNQQLPLPQEQRGAADGSSLASSFNLSFVPSVQPQTVDRPGLARRRPVRRPVNIGAFLQNLENKSLTSALPGDSHRTPVAALPTDVVFEDTQPFSQPLAGCSLSVHHSLPNPSQTEVEDAERVVGPRTPSTGTRPQSQMSRAGFGASPLPFSEPQPQSPELREAVGSKEAEEPKDLEGSSGDEETSGMPASRELSSSAQDLLLAEEPHQLFEPPPSPGVAAVSSESVPAKLPSRTRTAQPRHHQDPYKAGLSHYVKLFSFHTKMPVEKAALEMVEKCLDEYFQRLCNDLEVFAAHAGRKTVKPKDLELLMRRQGLVTDQVSLHVLVERYLPLEYRQQLIPCAFRGNSVFPAQ.

Residues 1 to 70 form a disordered region; the sequence is MADLSSPDGD…RKHSHGTGSV (70 aa). The span at 19–28 shows a compositional bias: basic and acidic residues; it reads HVLDTADSHT. The segment covering 34–57 has biased composition (polar residues); the sequence is STQTNPQRRRSQTPYSKRQGSQRK. Phosphothreonine is present on T86. The flexible stalk domain stretch occupies residues 94 to 381; that stretch reads ILLTAPESST…EPHQLFEPPP (288 aa). Disordered stretches follow at residues 102 to 156, 271 to 362, and 375 to 412; these read STVM…KRKQ, VHHS…ELSS, and QLFE…HQDP. The span at 294–306 shows a compositional bias: polar residues; the sequence is TPSTGTRPQSQMS. A phosphoserine mark is found at S313, S324, S333, S345, S346, S357, and S382. Positions 326–343 are enriched in basic and acidic residues; sequence ELREAVGSKEAEEPKDLE. The span at 384–395 shows a compositional bias: low complexity; it reads GVAAVSSESVPA.

This sequence belongs to the CENP-T/CNN1 family. As to quaternary structure, component of the CENPA-CAD complex, composed of CENPI, CENPK, CENPL, CENPO, CENPP, CENPQ, CENPR and CENPS. The CENPA-CAD complex is probably recruited on centromeres by the CENPA-NAC complex, at least composed of CENPA, CENPC, CENPH, CENPM, CENPN, CENPT and CENPU. Identified in a centromeric complex containing histones H2A, H2B, H3 and H4, and at least CENPA, CENPB, CENPC, CENPT, CENPN, HJURP, SUPT16H, SSRP1 and RSF1. Interacts (via N-terminus) with the NDC80 complex. Heterodimer with CENPW; this dimer coassembles with CENPS-CENPX heterodimers at centromeres to form the tetrameric CENP-T-W-S-X complex. In terms of processing, dynamically phosphorylated during the cell cycle. Phosphorylated during G2 phase, metaphase and anaphase, but not during telophase or G1 phase.

The protein localises to the nucleus. Its subcellular location is the chromosome. It is found in the centromere. The protein resides in the kinetochore. Functionally, component of the CENPA-NAC (nucleosome-associated) complex, a complex that plays a central role in assembly of kinetochore proteins, mitotic progression and chromosome segregation. The CENPA-NAC complex recruits the CENPA-CAD (nucleosome distal) complex and may be involved in incorporation of newly synthesized CENPA into centromeres. Part of a nucleosome-associated complex that binds specifically to histone H3-containing nucleosomes at the centromere, as opposed to nucleosomes containing CENPA. Component of the heterotetrameric CENP-T-W-S-X complex that binds and supercoils DNA, and plays an important role in kinetochore assembly. CENPT has a fundamental role in kinetochore assembly and function. It is one of the inner kinetochore proteins, with most further proteins binding downstream. Required for normal chromosome organization and normal progress through mitosis. This chain is Centromere protein T (Cenpt), found in Rattus norvegicus (Rat).